The sequence spans 704 residues: Translin-associated factor X-interacting protein 1 (704 aa).

The segment at 1–37 (MANLQERKSFSKPRISIQASGGTPEAKGIEKRKLSQK) is disordered. Coiled coils occupy residues 190–230 (EISV…AEEY) and 304–342 (RRDLEMQEKTNMELQEQLESLKADYEEVQKEHELLLQLH).

As to quaternary structure, interacts with TSNAX. In terms of tissue distribution, specifically expressed in testes. Predominantly detected in the post-meiotic stages of germ cells.

The protein localises to the cytoplasm. It is found in the perinuclear region. Functionally, possible role in spermatogenesis. This chain is Translin-associated factor X-interacting protein 1, found in Mus musculus (Mouse).